The sequence spans 395 residues: NADH-quinone oxidoreductase subunit D (395 aa).

Belongs to the complex I 49 kDa subunit family. In terms of assembly, NDH-1 is composed of 14 different subunits. Subunits NuoB, C, D, E, F, and G constitute the peripheral sector of the complex.

It is found in the cell inner membrane. The catalysed reaction is a quinone + NADH + 5 H(+)(in) = a quinol + NAD(+) + 4 H(+)(out). In terms of biological role, NDH-1 shuttles electrons from NADH, via FMN and iron-sulfur (Fe-S) centers, to quinones in the respiratory chain. The immediate electron acceptor for the enzyme in this species is believed to be a menaquinone. Couples the redox reaction to proton translocation (for every two electrons transferred, four hydrogen ions are translocated across the cytoplasmic membrane), and thus conserves the redox energy in a proton gradient. The chain is NADH-quinone oxidoreductase subunit D from Chlorobium luteolum (strain DSM 273 / BCRC 81028 / 2530) (Pelodictyon luteolum).